We begin with the raw amino-acid sequence, 270 residues long: 5'-AMP-activated protein kinase subunit beta-1 (270 aa).

The tract at residues 1-46 (MGNTSSERAALERHGGHKTPRRDSSGGTKDGDRPKILMDSPEDADL) is disordered. Gly-2 carries the N-myristoyl glycine lipid modification. At Thr-4 the chain carries Phosphothreonine. Phosphoserine occurs at positions 5 and 6. Position 19 is a phosphothreonine (Thr-19). Positions 21–36 (RRDSSGGTKDGDRPKI) are enriched in basic and acidic residues. Phosphoserine; by autocatalysis is present on residues Ser-24 and Ser-25. Ser-40, Ser-96, and Ser-101 each carry phosphoserine. Positions 68–163 (EVNDKAPAQA…QVKKTDFEVF (96 aa)) are glycogen-binding domain. Position 108 is a phosphoserine; by autocatalysis (Ser-108). At Thr-148 the chain carries Phosphothreonine. Ser-182 carries the post-translational modification Phosphoserine.

Belongs to the 5'-AMP-activated protein kinase beta subunit family. As to quaternary structure, AMPK is a heterotrimer of an alpha catalytic subunit (PRKAA1 or PRKAA2), a beta (PRKAB1 or PRKAB2) and a gamma non-catalytic subunits (PRKAG1, PRKAG2 or PRKAG3). Interacts with FNIP1 and FNIP2. Post-translationally, phosphorylated when associated with the catalytic subunit (PRKAA1 or PRKAA2). Phosphorylated by ULK1; leading to negatively regulate AMPK activity and suggesting the existence of a regulatory feedback loop between ULK1 and AMPK.

Its function is as follows. Non-catalytic subunit of AMP-activated protein kinase (AMPK), an energy sensor protein kinase that plays a key role in regulating cellular energy metabolism. In response to reduction of intracellular ATP levels, AMPK activates energy-producing pathways and inhibits energy-consuming processes: inhibits protein, carbohydrate and lipid biosynthesis, as well as cell growth and proliferation. AMPK acts via direct phosphorylation of metabolic enzymes, and by longer-term effects via phosphorylation of transcription regulators. Also acts as a regulator of cellular polarity by remodeling the actin cytoskeleton; probably by indirectly activating myosin. Beta non-catalytic subunit acts as a scaffold on which the AMPK complex assembles, via its C-terminus that bridges alpha (PRKAA1 or PRKAA2) and gamma subunits (PRKAG1, PRKAG2 or PRKAG3). This is 5'-AMP-activated protein kinase subunit beta-1 (PRKAB1) from Pongo abelii (Sumatran orangutan).